The chain runs to 385 residues: tRNA (guanine-N(7)-)-methyltransferase non-catalytic subunit wuho (385 aa).

WD repeat units follow at residues 68–108 (KVEV…AKLL), 155–194 (GHLS…DIHS), and 198–236 (GHKE…ELLH).

Belongs to the WD repeat TRM82 family. Forms a heterodimer with the catalytic subunit Mettl1. Interacts with mei-P26 and weakly interacts with bgcn; required for the function or formation of the mei-P26-bgcn-bam-sxl complex. Interacts with nanos; may be involved in mei-P26-dependent derepression of the BMP signaling pathway. Interacts with Myc; the interaction may be mediated by mei-P26 and may be involved in the regulation of ribosome biogenesis. As to expression, in testis, it is present at high level in hub cells, a niche for germline stem cells of testis. Ubiquitously expressed in all testicular cells throughout spermatogenesis. Ubiquitously expressed in all germline and somatic cells of the ovary.

Its subcellular location is the nucleus. The protein localises to the cytoplasm. It participates in tRNA modification; N(7)-methylguanine-tRNA biosynthesis. Required for the Mettl1-dependent formation of N(7)-methylguanine at position 46 (m7G46) in tRNA. In the Mettl1-wuho methyltransferase complex, it is required to stabilize and induce conformational changes of the catalytic subunit. Required for binding of nanos mRNA and repression of translation by the mei-P26-bgcn-bam-sxl complex. May cooperate with mei-P26 and nanos to derepress the BMP signaling pathway. May cooperate with mei-P26 to suppress expression of a subset of microRNAs. May cooperate with mei-P26 to regulate bam expression levels in germline cells during gametogenesis. Required to promote mitosis to meiosis transition during gametogenesis. May regulate germline cell division in part by regulating ribosome biogenesis. The polypeptide is tRNA (guanine-N(7)-)-methyltransferase non-catalytic subunit wuho (Drosophila grimshawi (Hawaiian fruit fly)).